The sequence spans 81 residues: ATP synthase subunit c, chloroplastic (81 aa).

Transmembrane regions (helical) follow at residues 7-27 and 57-77; these read AASVIAAGLAVGLASIGPGIG and LAFMEALTIYGLVVALALLFA.

This sequence belongs to the ATPase C chain family. As to quaternary structure, F-type ATPases have 2 components, F(1) - the catalytic core - and F(0) - the membrane proton channel. F(1) has five subunits: alpha(3), beta(3), gamma(1), delta(1), epsilon(1). F(0) has four main subunits: a(1), b(1), b'(1) and c(10-14). The alpha and beta chains form an alternating ring which encloses part of the gamma chain. F(1) is attached to F(0) by a central stalk formed by the gamma and epsilon chains, while a peripheral stalk is formed by the delta, b and b' chains.

The protein resides in the plastid. Its subcellular location is the chloroplast thylakoid membrane. F(1)F(0) ATP synthase produces ATP from ADP in the presence of a proton or sodium gradient. F-type ATPases consist of two structural domains, F(1) containing the extramembraneous catalytic core and F(0) containing the membrane proton channel, linked together by a central stalk and a peripheral stalk. During catalysis, ATP synthesis in the catalytic domain of F(1) is coupled via a rotary mechanism of the central stalk subunits to proton translocation. In terms of biological role, key component of the F(0) channel; it plays a direct role in translocation across the membrane. A homomeric c-ring of between 10-14 subunits forms the central stalk rotor element with the F(1) delta and epsilon subunits. The polypeptide is ATP synthase subunit c, chloroplastic (Staurastrum punctulatum (Green alga)).